Consider the following 152-residue polypeptide: Ribonuclease HI (152 aa).

The RNase H type-1 domain maps to 1 to 142; that stretch reads MDSKVVIYTD…ADKLAVQGRE (142 aa). Mg(2+) contacts are provided by Asp-10, Glu-48, Asp-70, and Asp-134.

It belongs to the RNase H family. As to quaternary structure, monomer. It depends on Mg(2+) as a cofactor.

The protein localises to the cytoplasm. The catalysed reaction is Endonucleolytic cleavage to 5'-phosphomonoester.. Functionally, endonuclease that specifically degrades the RNA of RNA-DNA hybrids. This Rickettsia prowazekii (strain Madrid E) protein is Ribonuclease HI (rnhA).